The sequence spans 905 residues: A disintegrin and metalloproteinase with thrombospondin motifs 8 (905 aa).

A signal peptide spans 1–28; the sequence is MLRDPTTTGWPPLLLLLLQLPPPPLVCG. Positions 29–228 are excised as a propeptide; it reads APAGPGTGAQ…PFGSKTRSKR (200 aa). Disordered stretches follow at residues 139–163 and 186–225; these read PQGA…RRED and NGQG…SKTR. The segment covering 191-215 has biased composition (basic and acidic residues); the sequence is ERSDNEEDRKQDKEGLLKETEDSRK. A Peptidase M12B domain is found at 234 to 444; it reads RFVETLLVAD…GHGDCLLDAP (211 aa). Intrachain disulfides connect cysteine 309/cysteine 362, cysteine 338/cysteine 344, cysteine 356/cysteine 439, cysteine 394/cysteine 423, cysteine 478/cysteine 502, cysteine 487/cysteine 523, cysteine 517/cysteine 528, cysteine 554/cysteine 591, cysteine 558/cysteine 596, and cysteine 569/cysteine 581. Histidine 378 is a Zn(2+) binding site. The active site involves glutamate 379. Histidine 382 and histidine 388 together coordinate Zn(2+). N-linked (GlcNAc...) asparagine glycans are attached at residues asparagine 415, asparagine 480, and asparagine 506. One can recognise a Disintegrin domain in the interval 453 to 541; sequence GLPGHSTLYE…EDVENPKAVV (89 aa). In terms of domain architecture, TSP type-1 1 spans 542-597; the sequence is DGDWGPWRPWGQCSRTCGGGIQFSNRECDNPMPQNGGRFCLGERVKYQSCNTEECP. An N-linked (GlcNAc...) asparagine glycan is attached at asparagine 615. The interval 706–847 is spacer; that stretch reads RKISGSFTPF…RATTNIIQSL (142 aa). In terms of domain architecture, TSP type-1 2 spans 848–904; sequence PSAEWVLGDWSECPSTCRGSWQRRTVECRDPSGQASDTCDEALKPEDAKPCGSQPCP. Residues 877-905 form a disordered region; that stretch reads DPSGQASDTCDEALKPEDAKPCGSQPCPL.

The cofactor is Zn(2+). Post-translationally, the precursor is cleaved by a furin endopeptidase. Glycosylated. Can be O-fucosylated by POFUT2 on a serine or a threonine residue found within the consensus sequence C1-X(2)-(S/T)-C2-G of the TSP type-1 repeat domains where C1 and C2 are the first and second cysteine residue of the repeat, respectively. Fucosylated repeats can then be further glycosylated by the addition of a beta-1,3-glucose residue by the glucosyltransferase, B3GALTL. Fucosylation mediates the efficient secretion of ADAMTS family members. Can also be C-glycosylated with one or two mannose molecules on tryptophan residues within the consensus sequence W-X-X-W of the TPRs, and N-glycosylated. These other glycosylations can also facilitate secretion. Expressed specifically in adult lung and heart and low expression during mouse development.

The protein localises to the secreted. The protein resides in the extracellular space. It localises to the extracellular matrix. Functionally, has anti-angiogenic properties. The protein is A disintegrin and metalloproteinase with thrombospondin motifs 8 (Adamts8) of Mus musculus (Mouse).